A 451-amino-acid polypeptide reads, in one-letter code: Glycylpeptide N-tetradecanoyltransferase (451 aa).

Tetradecanoyl-CoA-binding positions include 177–179 (LCI) and 185–189 (NKRLA). Residue leucine 451 is the Proton acceptor; via carboxylate of the active site.

It belongs to the NMT family. As to quaternary structure, monomer.

It is found in the cytoplasm. It catalyses the reaction N-terminal glycyl-[protein] + tetradecanoyl-CoA = N-tetradecanoylglycyl-[protein] + CoA + H(+). With respect to regulation, competitively inhibited by SC-58272, a peptidomimetic derived from the N-terminal sequence of a natural substrate. In terms of biological role, adds a myristoyl group to the N-terminal glycine residue of certain cellular proteins. Substrate specificity requires an N-terminal glycine in the nascent polypeptide substrates. Ser is present at position 5 in almost all known N-myristoyl proteins and Lys is commonly encountered at postion 6. Basic residues are preferred at positions 7 and 8. This is Glycylpeptide N-tetradecanoyltransferase (NMT1) from Candida albicans (strain SC5314 / ATCC MYA-2876) (Yeast).